The sequence spans 794 residues: Ubiquitin carboxyl-terminal hydrolase 10 (794 aa).

An N-acetylalanine modification is found at alanine 2. Residues 2–99 are interaction with p53/TP53; the sequence is ALHNPQYIFG…ILGCPTSKKT (98 aa). A G3BP1-binding region spans residues 6–21; that stretch reads PQYIFGDFSPDEFNQF. A phosphothreonine mark is found at threonine 24 and threonine 99. Residues 123-164 are disordered; sequence ESSSNAEAETLENDSGAGGLGQRERKKKKKRPPGYYSYLKDG. Phosphoserine is present on residues serine 209, serine 224, and serine 316. The disordered stretch occupies residues 303 to 326; that stretch reads ESADLDPAKPESQSPPAESALSVS. The span at 313–326 shows a compositional bias: polar residues; that stretch reads ESQSPPAESALSVS. Serine 332 is modified (phosphoserine; by ATM). Serine 361 and serine 366 each carry phosphoserine. The USP domain occupies 411–791; that stretch reads RGLINKGNWC…TAYLLYYRRV (381 aa). Cysteine 420 serves as the catalytic Nucleophile. The residue at position 543 (serine 543) is a Phosphoserine. The disordered stretch occupies residues 546-588; sequence HEKHSVSNGPGSHLIEDEELEDTGEGSEDEWEQVGPKNKTSVT. The segment covering 561–577 has biased composition (acidic residues); sequence EDEELEDTGEGSEDEWE. Threonine 568 carries the phosphothreonine modification. A Phosphoserine modification is found at serine 572. The active-site Proton acceptor is histidine 745.

This sequence belongs to the peptidase C19 family. USP10 subfamily. In terms of assembly, found in a deubiquitination complex with TANK, USP10 and ZC3H12A; this complex inhibits genotoxic stress- or interleukin-1-beta (IL1B)-mediated NF-kappa-B activation by promoting IKBKG or TRAF6 deubiquitination. Interacts with IKBKG; this interaction increases in response to DNA damage. Interacts with TANK; this interaction increases in response to DNA damage. Interacts with TRAF6; this interaction increases in response to DNA damage. Interacts with ZC3H12A; this interaction increases in response to DNA damage. Interacts with G3BP1 (via NTF2 domain) and G3BP2 (via NTF2 domain); inhibiting stress granule formation. In terms of processing, phosphorylated by ATM following DNA damage, leading to stabilization and translocation it to the nucleus. Ubiquitinated. Deubiquitinated by USP13.

The protein resides in the cytoplasm. It localises to the nucleus. The protein localises to the early endosome. The catalysed reaction is Thiol-dependent hydrolysis of ester, thioester, amide, peptide and isopeptide bonds formed by the C-terminal Gly of ubiquitin (a 76-residue protein attached to proteins as an intracellular targeting signal).. Specifically inhibited by spautin-1 (specific and potent autophagy inhibitor-1), a derivative of MBCQ that binds to USP10 and inhibits deubiquitinase activity. Regulated by PIK3C3/VPS34-containing complexes. Its function is as follows. Hydrolase that can remove conjugated ubiquitin from target proteins such as p53/TP53, RPS2/us5, RPS3/us3, RPS10/eS10, BECN1, SNX3 and CFTR. Acts as an essential regulator of p53/TP53 stability: in unstressed cells, specifically deubiquitinates p53/TP53 in the cytoplasm, leading to counteract MDM2 action and stabilize p53/TP53. Following DNA damage, translocates to the nucleus and deubiquitinates p53/TP53, leading to regulate the p53/TP53-dependent DNA damage response. Component of a regulatory loop that controls autophagy and p53/TP53 levels: mediates deubiquitination of BECN1, a key regulator of autophagy, leading to stabilize the PIK3C3/VPS34-containing complexes. In turn, PIK3C3/VPS34-containing complexes regulate USP10 stability, suggesting the existence of a regulatory system by which PIK3C3/VPS34-containing complexes regulate p53/TP53 protein levels via USP10 and USP13. Does not deubiquitinate MDM2. Plays a key role in 40S ribosome subunit recycling when a ribosome has stalled during translation: acts both by inhibiting formation of stress granules, which store stalled translation pre-initiation complexes, and mediating deubiquitination of 40S ribosome subunits. Acts as a negative regulator of stress granules formation by lowering G3BP1 and G3BP2 valence, thereby preventing G3BP1 and G3BP2 ability to undergo liquid-liquid phase separation (LLPS) and assembly of stress granules. Promotes 40S ribosome subunit recycling following ribosome dissociation in response to ribosome stalling by mediating deubiquitination of 40S ribosomal proteins RPS2/us5, RPS3/us3 and RPS10/eS10, thereby preventing their degradation by the proteasome. Part of a ribosome quality control that takes place when ribosomes have stalled during translation initiation (iRQC): USP10 acts by removing monoubiquitination of RPS2/us5 and RPS3/us3, promoting 40S ribosomal subunit recycling. Deubiquitinates CFTR in early endosomes, enhancing its endocytic recycling. Involved in a TANK-dependent negative feedback response to attenuate NF-kappa-B activation via deubiquitinating IKBKG or TRAF6 in response to interleukin-1-beta (IL1B) stimulation or upon DNA damage. Deubiquitinates TBX21 leading to its stabilization. Plays a negative role in the RLR signaling pathway upon RNA virus infection by blocking the RIGI-mediated MAVS activation. Mechanistically, removes the unanchored 'Lys-63'-linked polyubiquitin chains of MAVS to inhibit its aggregation, essential for its activation. This chain is Ubiquitin carboxyl-terminal hydrolase 10 (Usp10), found in Rattus norvegicus (Rat).